The sequence spans 595 residues: S-(+)-linalool synthase, chloroplastic (595 aa).

A chloroplast-targeting transit peptide spans 1–46 (MVCHVFSSFSSSLIRVLEAPLLLPAASASSSSSSSPASRSGGRRRR). Low complexity predominate over residues 27 to 40 (SASSSSSSSPASRS). Positions 27–54 (SASSSSSSSPASRSGGRRRRAAHVRPSP) are disordered. Arg309, Asp346, Asp350, Arg487, and Asp490 together coordinate (2E)-geranyl diphosphate. Mg(2+) is bound by residues Asp346 and Asp350. The short motif at 346–350 (DDIFD) is the DDXXD motif element. 3 residues coordinate Mg(2+): Asp490, Ser494, and Glu498.

This sequence belongs to the terpene synthase family. Tpsb subfamily. Requires Mg(2+) as cofactor. Mn(2+) is required as a cofactor.

It localises to the plastid. The protein resides in the chloroplast. It carries out the reaction (2E)-geranyl diphosphate + H2O = (S)-linalool + diphosphate. It functions in the pathway secondary metabolite biosynthesis; terpenoid biosynthesis. Involved in monoterpene (C10) biosynthesis. The major product is S-(+)-linalool. Linalool production is induced by jasmonate in response to pathogen attack, it possesses antibacterial activity and is important for resistance to the bacterial blight pathogen Xanthomonas oryzae pv. oryzae (Xoo). Plants over-expressing linalool synthase display enhanced resistance to Xoo. The protein is S-(+)-linalool synthase, chloroplastic of Oryza sativa subsp. japonica (Rice).